The sequence spans 648 residues: ATPase family AAA domain-containing protein 3B (648 aa).

Disordered stretches follow at residues 1–54 (MSWL…DPTG) and 111–134 (QAEERRKTLSEETRQHQARAQYQD). Serine 2 bears the N-acetylserine mark. Over 2–246 (SWLFGVNKGP…FRAFVTDRDK (245 aa)) the chain is Mitochondrial intermembrane. Pro residues predominate over residues 17–26 (GPPPPLPPAQ). Basic and acidic residues-rich tracts occupy residues 32-48 (GGDRGLGDRPAPKDKWS) and 111-125 (QAEERRKTLSEETRQ). Positions 69–214 (RYAKEALNLA…DIIREQIRLK (146 aa)) form a coiled coil. The helical intramembrane region spans 247 to 264 (VTATVAGLTLLAVGVYSA). Residues 265–648 (KNATAVTGRF…PFCPPGHPLL (384 aa)) are Mitochondrial intermembrane-facing. 352 to 359 (GPPGTGKT) lines the ATP pocket. An N6-acetyllysine mark is found at lysine 427 and lysine 495.

Belongs to the AAA ATPase family. Forms heterooligomers with ATAD3A. Interacts with components of the mitochondrial ribosome, including MRPL11 and MRPS18B, and with other proteins involved in mitochondrial RNA metabolism, possibly via interaction with ATAD3A. Interacts with GADD45GIP1. In terms of tissue distribution, tends to be down-regulated in differentiated cells and re-expressed in pluripotent stem cells or cancer cells (at protein level).

It is found in the mitochondrion inner membrane. Functionally, may play a role in a mitochondrial network organization typical for stem cells, characterized by reduced mitochondrial metabolism, low mtDNA copies and fragmentated mitochondrial network. May act by suppressing ATAD3A function, interfering with ATAD3A interaction with matrix nucleoid complexes. In Homo sapiens (Human), this protein is ATPase family AAA domain-containing protein 3B (ATAD3B).